We begin with the raw amino-acid sequence, 559 residues long: Protein GRAVITROPIC IN THE LIGHT 1 (559 aa).

The segment at 107 to 127 (AVNRREEYDTEEEENEEEGEI) is disordered. A compositionally biased stretch (acidic residues) spans 114-127 (YDTEEEENEEEGEI).

In terms of biological role, required for red (R) and far red (FR) light-induced and phytochrome-mediated deregulation of negative gravitropism leading to randomization of hypocotyl growth orientation. In Arabidopsis thaliana (Mouse-ear cress), this protein is Protein GRAVITROPIC IN THE LIGHT 1.